The primary structure comprises 1158 residues: ATP-dependent helicase/deoxyribonuclease subunit B (1158 aa).

One can recognise a UvrD-like helicase ATP-binding domain in the interval Met-1–Asn-275. Gly-8–Ser-15 contacts ATP. Residues Asn-269 to Val-583 form the UvrD-like helicase C-terminal domain. Cys-784, Cys-1112, Cys-1115, and Cys-1121 together coordinate [4Fe-4S] cluster.

Belongs to the helicase family. AddB/RexB type 1 subfamily. Heterodimer of AddA and AddB. Requires Mg(2+) as cofactor. The cofactor is [4Fe-4S] cluster.

Its function is as follows. The heterodimer acts as both an ATP-dependent DNA helicase and an ATP-dependent, dual-direction single-stranded exonuclease. Recognizes the chi site generating a DNA molecule suitable for the initiation of homologous recombination. The AddB subunit has 5' -&gt; 3' nuclease activity but not helicase activity. The sequence is that of ATP-dependent helicase/deoxyribonuclease subunit B from Staphylococcus aureus (strain USA300).